The primary structure comprises 124 residues: Seripauperin-3 (124 aa).

A helical membrane pass occupies residues 7–24 (IAAGVAAIAAGIAAAPAT).

The protein belongs to the SRP1/TIP1 family. Seripauperin subfamily.

It is found in the membrane. This chain is Seripauperin-3 (PAU3), found in Saccharomyces cerevisiae (strain ATCC 204508 / S288c) (Baker's yeast).